The chain runs to 213 residues: Non-structural protein NP-1 (213 aa).

The disordered stretch occupies residues 1–80 (MERSRSPRET…ATRKETATKK (80 aa)). Basic and acidic residues-rich tracts occupy residues 15-33 (SRDK…ERTR) and 43-58 (AHGE…REKN).

The protein belongs to the Bocaparvovirus Non-structural protein NP-1 family.

It localises to the host nucleus. Required for the expression of the capsid proteins. Performs the splicing and internal polyadenylation of the viral capsid-encoding mRNA precursor, which allows its maturation and expression. Transactivates the viral promoter. This chain is Non-structural protein NP-1 (NP1), found in Bos taurus (Bovine).